The chain runs to 113 residues: uncharacterized protein (113 aa).

The HTH cro/C1-type domain occupies 16–70; that stretch reads LYEYLEPLDLKINELAELLHVHRNSVSALINNNRKLTTEMAFRLAKVFDTTVDFW. Residues 27-46 constitute a DNA-binding region (H-T-H motif); sequence INELAELLHVHRNSVSALIN.

This sequence belongs to the VapA/VapI family.

This is an uncharacterized protein from Escherichia coli O6:H1 (strain CFT073 / ATCC 700928 / UPEC).